The chain runs to 453 residues: tRNA-2-methylthio-N(6)-dimethylallyladenosine synthase (453 aa).

Residues 21–137 (RGVYISTYGC…LPQLVAKSFA (117 aa)) form the MTTase N-terminal domain. Residues cysteine 30, cysteine 66, cysteine 100, cysteine 174, cysteine 178, and cysteine 181 each coordinate [4Fe-4S] cluster. The region spanning 160–389 (RNPGVATYVN…FDVHEAMAFE (230 aa)) is the Radical SAM core domain. In terms of domain architecture, TRAM spans 392–453 (KRYEGTTMKV…FPAVFRGEMI (62 aa)).

Belongs to the methylthiotransferase family. MiaB subfamily. In terms of assembly, monomer. It depends on [4Fe-4S] cluster as a cofactor.

It localises to the cytoplasm. The enzyme catalyses N(6)-dimethylallyladenosine(37) in tRNA + (sulfur carrier)-SH + AH2 + 2 S-adenosyl-L-methionine = 2-methylsulfanyl-N(6)-dimethylallyladenosine(37) in tRNA + (sulfur carrier)-H + 5'-deoxyadenosine + L-methionine + A + S-adenosyl-L-homocysteine + 2 H(+). Functionally, catalyzes the methylthiolation of N6-(dimethylallyl)adenosine (i(6)A), leading to the formation of 2-methylthio-N6-(dimethylallyl)adenosine (ms(2)i(6)A) at position 37 in tRNAs that read codons beginning with uridine. This chain is tRNA-2-methylthio-N(6)-dimethylallyladenosine synthase, found in Bdellovibrio bacteriovorus (strain ATCC 15356 / DSM 50701 / NCIMB 9529 / HD100).